We begin with the raw amino-acid sequence, 453 residues long: Pup--protein ligase (453 aa).

Mg(2+) is bound at residue glutamate 9. ATP is bound at residue arginine 53. Tyrosine 55 serves as a coordination point for Mg(2+). Catalysis depends on aspartate 57, which acts as the Proton acceptor. Glutamate 63 serves as a coordination point for Mg(2+). The ATP site is built by threonine 66 and tryptophan 420.

It belongs to the Pup ligase/Pup deamidase family. Pup-conjugating enzyme subfamily.

The catalysed reaction is ATP + [prokaryotic ubiquitin-like protein]-L-glutamate + [protein]-L-lysine = ADP + phosphate + N(6)-([prokaryotic ubiquitin-like protein]-gamma-L-glutamyl)-[protein]-L-lysine.. The protein operates within protein degradation; proteasomal Pup-dependent pathway. Its pathway is protein modification; protein pupylation. Its function is as follows. Catalyzes the covalent attachment of the prokaryotic ubiquitin-like protein modifier Pup to the proteasomal substrate proteins, thereby targeting them for proteasomal degradation. This tagging system is termed pupylation. The ligation reaction involves the side-chain carboxylate of the C-terminal glutamate of Pup and the side-chain amino group of a substrate lysine. The chain is Pup--protein ligase from Streptomyces avermitilis (strain ATCC 31267 / DSM 46492 / JCM 5070 / NBRC 14893 / NCIMB 12804 / NRRL 8165 / MA-4680).